The primary structure comprises 293 residues: ATP synthase gamma chain (293 aa).

The protein belongs to the ATPase gamma chain family. As to quaternary structure, F-type ATPases have 2 components, CF(1) - the catalytic core - and CF(0) - the membrane proton channel. CF(1) has five subunits: alpha(3), beta(3), gamma(1), delta(1), epsilon(1). CF(0) has three main subunits: a, b and c.

The protein resides in the cell inner membrane. Its function is as follows. Produces ATP from ADP in the presence of a proton gradient across the membrane. The gamma chain is believed to be important in regulating ATPase activity and the flow of protons through the CF(0) complex. The chain is ATP synthase gamma chain from Nitratidesulfovibrio vulgaris (strain DSM 19637 / Miyazaki F) (Desulfovibrio vulgaris).